The chain runs to 1294 residues: Phosphoribosylformylglycinamidine synthase (1294 aa).

The disordered stretch occupies residues 303 to 325 (WPGAATGSGGEIRDEGATGRGSK). ATP is bound by residues 305 to 316 (GAATGSGGEIRD), 384 to 386 (TGY), and Ala-676. The Mg(2+) site is built by Asp-677, Glu-716, Asn-720, and Asp-883. Ser-885 contributes to the ATP binding site. The Glutamine amidotransferase type-1 domain maps to 1041–1294 (VAVLREQGVN…MFRNARRQLG (254 aa)). The active-site Nucleophile is Cys-1134. Active-site residues include His-1259 and Glu-1261.

This sequence in the N-terminal section; belongs to the FGAMS family. Monomer.

It localises to the cytoplasm. It catalyses the reaction N(2)-formyl-N(1)-(5-phospho-beta-D-ribosyl)glycinamide + L-glutamine + ATP + H2O = 2-formamido-N(1)-(5-O-phospho-beta-D-ribosyl)acetamidine + L-glutamate + ADP + phosphate + H(+). It functions in the pathway purine metabolism; IMP biosynthesis via de novo pathway; 5-amino-1-(5-phospho-D-ribosyl)imidazole from N(2)-formyl-N(1)-(5-phospho-D-ribosyl)glycinamide: step 1/2. Its function is as follows. Phosphoribosylformylglycinamidine synthase involved in the purines biosynthetic pathway. Catalyzes the ATP-dependent conversion of formylglycinamide ribonucleotide (FGAR) and glutamine to yield formylglycinamidine ribonucleotide (FGAM) and glutamate. The polypeptide is Phosphoribosylformylglycinamidine synthase (Pectobacterium atrosepticum (strain SCRI 1043 / ATCC BAA-672) (Erwinia carotovora subsp. atroseptica)).